Here is a 697-residue protein sequence, read N- to C-terminus: Transmembrane protein 168 (697 aa).

The next 3 helical transmembrane spans lie at L36–W56, L63–Y83, and A89–L109. An N-linked (GlcNAc...) asparagine glycan is attached at N111. Helical transmembrane passes span M172 to I192, F199 to T219, P223 to F243, L265 to L285, F293 to L313, F352 to A372, and G380 to F400. N-linked (GlcNAc...) asparagine glycosylation is found at N533 and N598. Residues I646 to C666 form a helical membrane-spanning segment.

Belongs to the TMEM168 family.

The protein localises to the nucleus membrane. In terms of biological role, plays a key role in maintaining the cardiac electrical stability by modulating cell surface expression of SCN5A. May play a role in the modulation of anxiety behavior by regulating GABAergic neuronal system in the nucleus accumbens. In Homo sapiens (Human), this protein is Transmembrane protein 168.